A 98-amino-acid polypeptide reads, in one-letter code: NADH-ubiquinone oxidoreductase chain 4L (98 aa).

A run of 3 helical transmembrane segments spans residues 1–21 (MMPINLNLIMAFSLALIGALV), 28–48 (STLLCLEGMMLSLFIQMALLI), and 59–79 (APLILLVFSACEAGLGLALLV).

The protein belongs to the complex I subunit 4L family. As to quaternary structure, core subunit of respiratory chain NADH dehydrogenase (Complex I) which is composed of 45 different subunits.

The protein localises to the mitochondrion inner membrane. It catalyses the reaction a ubiquinone + NADH + 5 H(+)(in) = a ubiquinol + NAD(+) + 4 H(+)(out). Its function is as follows. Core subunit of the mitochondrial membrane respiratory chain NADH dehydrogenase (Complex I) which catalyzes electron transfer from NADH through the respiratory chain, using ubiquinone as an electron acceptor. Part of the enzyme membrane arm which is embedded in the lipid bilayer and involved in proton translocation. The protein is NADH-ubiquinone oxidoreductase chain 4L (MT-ND4L) of Distoechurus pennatus (Feather-tailed possum).